A 62-amino-acid polypeptide reads, in one-letter code: uncharacterized protein (62 aa).

Transmembrane regions (helical) follow at residues 7-27 and 34-51; these read LLLL…VFIA and IIAS…GFTL.

Its subcellular location is the cell membrane. This is an uncharacterized protein from Bacillus subtilis (strain 168).